The sequence spans 341 residues: 5-formaminoimidazole-4-carboxamide-1-(beta)-D-ribofuranosyl 5'-monophosphate synthetase (341 aa).

Histidine 10 and threonine 77 together coordinate 5-amino-1-(5-phospho-beta-D-ribosyl)imidazole-4-carboxamide. Residues aspartate 106–methionine 317 enclose the ATP-grasp domain. ATP-binding positions include glutamate 132–tyrosine 188 and glutamate 210. Asparagine 238 contributes to the 5-amino-1-(5-phospho-beta-D-ribosyl)imidazole-4-carboxamide binding site. Positions 277 and 290 each coordinate Mg(2+).

It belongs to the phosphohexose mutase family. It depends on Mg(2+) as a cofactor. Mn(2+) is required as a cofactor.

The catalysed reaction is 5-amino-1-(5-phospho-beta-D-ribosyl)imidazole-4-carboxamide + formate + ATP = 5-formamido-1-(5-phospho-D-ribosyl)imidazole-4-carboxamide + ADP + phosphate. The protein operates within purine metabolism; IMP biosynthesis via de novo pathway; 5-formamido-1-(5-phospho-D-ribosyl)imidazole-4-carboxamide from 5-amino-1-(5-phospho-D-ribosyl)imidazole-4-carboxamide (formate route): step 1/1. In terms of biological role, catalyzes the ATP- and formate-dependent formylation of 5-aminoimidazole-4-carboxamide-1-beta-d-ribofuranosyl 5'-monophosphate (AICAR) to 5-formaminoimidazole-4-carboxamide-1-beta-d-ribofuranosyl 5'-monophosphate (FAICAR) in the absence of folates. This Nitrosopumilus maritimus (strain SCM1) protein is 5-formaminoimidazole-4-carboxamide-1-(beta)-D-ribofuranosyl 5'-monophosphate synthetase.